Reading from the N-terminus, the 164-residue chain is UPF0262 protein Saro_0143 (164 aa).

It belongs to the UPF0262 family.

This is UPF0262 protein Saro_0143 from Novosphingobium aromaticivorans (strain ATCC 700278 / DSM 12444 / CCUG 56034 / CIP 105152 / NBRC 16084 / F199).